A 1115-amino-acid polypeptide reads, in one-letter code: Disheveled-associated activator of morphogenesis 2 (1115 aa).

Residues 40–416 (GPIPNPEELN…QIVLQDERGV (377 aa)) enclose the GBD/FH3 domain. The stretch at 434 to 515 (MLINENEVKQ…ELVARHNESS (82 aa)) forms a coiled coil. Disordered regions lie at residues 510 to 605 (RHNE…SHPL) and 655 to 697 (QEGP…SATG). Positions 518–694 (PVSSPPPPGG…TEKASRSMVS (177 aa)) constitute an FH1 domain. Residues 540–583 (LPPPPPPLPFDSCPPPPAPPLPPGGPPIPPGAPPCFSSGPPPSH) are compositionally biased toward pro residues. The region spanning 595–1042 (KKRIPQPSHP…DERRARMEFM (448 aa)) is the FH2 domain. Positions 1065 to 1095 (EESGEFDDLVSALRSGEVFDKDLSKFKRNRK) constitute a DAD domain.

Belongs to the formin homology family. As to quaternary structure, interacts with DVL3. Interacts with INF2. As to expression, in early embryogenesis, expression is confined to embryonic ectoderm. Highly dynamic expression in later stages of gastrulation. In early somite stages, detected in posterior node and persists until 9-10 somites have developed when expression is concentrated in the chordoneural hinge. During organogenesis, expressed in the CNS, PNS, liver primordia, limb buds and genital tubercle.

In terms of biological role, key regulator of the Wnt signaling pathway, which is required for various processes during development, such as dorsal patterning, determination of left/right symmetry or myelination in the central nervous system. Acts downstream of Wnt ligands and upstream of beta-catenin (CTNNB1). Required for canonical Wnt signaling pathway during patterning in the dorsal spinal cord by promoting the aggregation of Disheveled (Dvl) complexes, thereby clustering and formation of Wnt receptor signalosomes and potentiating Wnt activity. During dorsal patterning of the spinal cord, inhibits oligodendrocytes differentiation via interaction with PIP5K1A. Also regulates non-canonical Wnt signaling pathway. Acts downstream of PITX2 in the developing gut and is required for left/right asymmetry within dorsal mesentery: affects mesenchymal condensation by lengthening cadherin-based junctions through WNT5A and non-canonical Wnt signaling, inducing polarized condensation in the left dorsal mesentery necessary to initiate gut rotation. Together with DAAM1, required for myocardial maturation and sarcomere assembly. Is a regulator of actin nucleation and elongation, filopodia formation and podocyte migration. This Mus musculus (Mouse) protein is Disheveled-associated activator of morphogenesis 2.